The chain runs to 137 residues: Proline-rich protein 13 (137 aa).

Disordered stretches follow at residues 26-54 and 94-137; these read PPPL…PCRP and VGPG…SDSD. Basic residues predominate over residues 103-124; that stretch reads KTRKKMKKAHKKSHKHHKHGKH. Residues 125-137 show a composition bias toward low complexity; sequence SSSSSSSSSSDSD.

It is found in the nucleus. Functionally, negatively regulates TSP1 expression at the level of transcription. This down-regulation was shown to reduce taxane-induced apoptosis. This chain is Proline-rich protein 13 (Prr13), found in Mus musculus (Mouse).